The chain runs to 141 residues: Large ribosomal subunit protein uL11 (141 aa).

The protein belongs to the universal ribosomal protein uL11 family. Part of the ribosomal stalk of the 50S ribosomal subunit. Interacts with L10 and the large rRNA to form the base of the stalk. L10 forms an elongated spine to which L12 dimers bind in a sequential fashion forming a multimeric L10(L12)X complex. One or more lysine residues are methylated.

Forms part of the ribosomal stalk which helps the ribosome interact with GTP-bound translation factors. The polypeptide is Large ribosomal subunit protein uL11 (Ruminiclostridium cellulolyticum (strain ATCC 35319 / DSM 5812 / JCM 6584 / H10) (Clostridium cellulolyticum)).